The chain runs to 438 residues: Carboxypeptidase A6 (438 aa).

Residues 1-30 (MNFLGNPRSHTAAFLPVCWLLLNILKPGHC) form the signal peptide. A propeptide spans 31 to 129 (HSYDNRYAGD…NSLQTQRNRR (99 aa)) (activation peptide). N-linked (GlcNAc...) asparagine glycosylation is found at Asn89 and Asn153. The region spanning 138–433 (VYHSLEDIQS…LAVKNITMHL (296 aa)) is the Peptidase M14 domain. Residues His197 and Glu200 each coordinate Zn(2+). Substrate contacts are provided by residues 197–200 (HARE), Arg255, and 272–273 (NR). Cys266 and Cys289 are joined by a disulfide. His325 provides a ligand contact to Zn(2+). 326-327 (AY) contacts substrate. Asn344 carries an N-linked (GlcNAc...) asparagine glycan. Tyr377 serves as a coordination point for substrate. The active-site Proton donor/acceptor is the Glu399. Asn428 carries N-linked (GlcNAc...) asparagine glycosylation.

Belongs to the peptidase M14 family. Zn(2+) is required as a cofactor. In terms of tissue distribution, in brain, highly expressed in the olfactory bulb with lower levels in other regions including cerebral cortex, hippocampus, hypothalamus, striatum and medulla. Within the olfactory bulb, highest levels occur in the mitral and granular layers with lower levels in the internal and external plexiform layers. Moderate levels are found in the epididymis with low levels in colon and spleen. Not detected in adrenal, liver, lung, ovary or testis. At embryonic day 14.5, enriched in eye, ear, osteoblasts, stomach, skin, dorsal root ganglia and throughout the CNS.

Its subcellular location is the secreted. It is found in the extracellular space. The protein localises to the extracellular matrix. Its function is as follows. May be involved in the proteolytic inactivation of enkephalins and neurotensin in some brain areas. May convert inactive angiotensin I into the biologically active angiotensin II. Releases a C-terminal amino acid, with preference for large hydrophobic C-terminal amino acids and shows only very weak activity toward small amino acids and histidine. The sequence is that of Carboxypeptidase A6 (Cpa6) from Mus musculus (Mouse).